The following is a 317-amino-acid chain: Acetylglutamate kinase (317 aa).

Residues G70–G71, R92, and N191 contribute to the substrate site.

This sequence belongs to the acetylglutamate kinase family. ArgB subfamily.

Its subcellular location is the cytoplasm. It catalyses the reaction N-acetyl-L-glutamate + ATP = N-acetyl-L-glutamyl 5-phosphate + ADP. Its pathway is amino-acid biosynthesis; L-arginine biosynthesis; N(2)-acetyl-L-ornithine from L-glutamate: step 2/4. Its function is as follows. Catalyzes the ATP-dependent phosphorylation of N-acetyl-L-glutamate. The chain is Acetylglutamate kinase from Corynebacterium glutamicum (strain R).